We begin with the raw amino-acid sequence, 231 residues long: Probable GTP-binding protein EngB (231 aa).

Residues 51–231 (DLSEIAFAGR…RAQLAALASP (181 aa)) form the EngB-type G domain. GTP contacts are provided by residues 59-66 (GRSNVGKS), 86-90 (GRTQE), 109-112 (DLPG), 176-179 (TKAD), and 210-212 (TSS). Mg(2+) is bound by residues S66 and T88.

It belongs to the TRAFAC class TrmE-Era-EngA-EngB-Septin-like GTPase superfamily. EngB GTPase family. Requires Mg(2+) as cofactor.

Necessary for normal cell division and for the maintenance of normal septation. In Rhodospirillum rubrum (strain ATCC 11170 / ATH 1.1.1 / DSM 467 / LMG 4362 / NCIMB 8255 / S1), this protein is Probable GTP-binding protein EngB.